The sequence spans 379 residues: MTILRKSHPLMKMVNHAFIDLPAPSNISGWWNFGSLLGLCLIIQIASGLFLDMHYTSDTLTAFSSVAHICRDVNYGWLIRYIHANGASLFFVCLYLHIGRGIYYGSYSYKETWNIGIILLFLTMATAFMGYVLPWGQMSFWGATVITNLLSAIPYIGTDLVEWIWGGFSVDKATLNRFFAFHFILPFIIAAMAMVHLLFLHETGSNNPLGIPSNCDKIPFHPYYTTKDFLGIVLLLTFFFTMVPFFPDLLGDPDNYSPANPLNTPPHIKPEWYFLFAYAILRSIPNKLGGVIALILSILILALLPHIQTASQRSLMFRPISQFLFWLLVSDVLVLTWIGGQPVEPPFIIIGQIASLSYFTIILVLMPIAGINENKMLKW.

A run of 4 helical transmembrane segments spans residues 33–53 (FGSLLGLCLIIQIASGLFLDM), 77–98 (WLIRYIHANGASLFFVCLYLHI), 113–133 (WNIGIILLFLTMATAFMGYVL), and 178–198 (FFAFHFILPFIIAAMAMVHLL). Positions 83 and 97 each coordinate heme b. Positions 182 and 196 each coordinate heme b. Histidine 201 is a binding site for a ubiquinone. Transmembrane regions (helical) follow at residues 226-246 (TKDFLGIVLLLTFFFTMVPFF), 288-308 (LGGVIALILSILILALLPHIQ), 320-340 (ISQFLFWLLVSDVLVLTWIGG), and 347-367 (FIIIGQIASLSYFTIILVLMP).

Belongs to the cytochrome b family. The cytochrome bc1 complex contains 11 subunits: 3 respiratory subunits (MT-CYB, CYC1 and UQCRFS1), 2 core proteins (UQCRC1 and UQCRC2) and 6 low-molecular weight proteins (UQCRH/QCR6, UQCRB/QCR7, UQCRQ/QCR8, UQCR10/QCR9, UQCR11/QCR10 and a cleavage product of UQCRFS1). This cytochrome bc1 complex then forms a dimer. The cofactor is heme b.

It is found in the mitochondrion inner membrane. Component of the ubiquinol-cytochrome c reductase complex (complex III or cytochrome b-c1 complex) that is part of the mitochondrial respiratory chain. The b-c1 complex mediates electron transfer from ubiquinol to cytochrome c. Contributes to the generation of a proton gradient across the mitochondrial membrane that is then used for ATP synthesis. This chain is Cytochrome b (MT-CYB), found in Dipodomys nelsoni (Nelson's kangaroo rat).